Reading from the N-terminus, the 272-residue chain is Phosphatidylglycerol--prolipoprotein diacylglyceryl transferase (272 aa).

The next 4 membrane-spanning stretches (helical) occupy residues 15–35 (LGPL…LVLF), 53–73 (AFAV…WHVV), 90–110 (IWEG…CFFV), and 117–137 (VPPF…LCFA). A 1,2-diacyl-sn-glycero-3-phospho-(1'-sn-glycerol) is bound at residue Arg138. A run of 3 helical transmembrane segments spans residues 174–194 (FHPI…ILLV), 199–219 (VFVK…VLYG), and 237–257 (FGLD…VLIA).

Belongs to the Lgt family.

It localises to the cell membrane. The enzyme catalyses L-cysteinyl-[prolipoprotein] + a 1,2-diacyl-sn-glycero-3-phospho-(1'-sn-glycerol) = an S-1,2-diacyl-sn-glyceryl-L-cysteinyl-[prolipoprotein] + sn-glycerol 1-phosphate + H(+). The protein operates within protein modification; lipoprotein biosynthesis (diacylglyceryl transfer). Its function is as follows. Catalyzes the transfer of the diacylglyceryl group from phosphatidylglycerol to the sulfhydryl group of the N-terminal cysteine of a prolipoprotein, the first step in the formation of mature lipoproteins. This chain is Phosphatidylglycerol--prolipoprotein diacylglyceryl transferase, found in Tropheryma whipplei (strain Twist) (Whipple's bacillus).